The sequence spans 175 residues: MPSKNSINRPKLTSNLHHKVHSLNKKRAQRERAGLLKPARSSVNSKSGEIKSVALDLYFQNKKNESQNSTAVTLQNASSSPASITTRTLSKKRAKKIERNLKYATQRKLLVDASAKLEDEMDIDLDGGKKVKENEKKSSLTLVKEALWSVIDDTASQGLIIENGQGTTLGGPFFP.

Polar residues predominate over residues 1 to 15 (MPSKNSINRPKLTSN). Disordered regions lie at residues 1–43 (MPSK…RSSV) and 72–91 (VTLQ…TLSK). Residues 16 to 29 (LHHKVHSLNKKRAQ) show a composition bias toward basic residues. Polar residues predominate over residues 72 to 88 (VTLQNASSSPASITTRT).

The protein belongs to the ALB1 family. As to quaternary structure, component of the nucleoplasmic and cytoplasmic pre-60S ribosomal particles.

It localises to the cytoplasm. The protein resides in the nucleus. In terms of biological role, involved in proper assembly of pre-ribosomal particles during the biogenesis of the 60S ribosomal subunit. Accompanies the pre-60S particles to the cytoplasm. This Saccharomyces cerevisiae (strain YJM789) (Baker's yeast) protein is Ribosome biogenesis protein ALB1 (ALB1).